The chain runs to 593 residues: UvrABC system protein C (593 aa).

Positions 14 to 91 (DKPGCYLMKN…IKEHDPRYNV (78 aa)) constitute a GIY-YIG domain. The UVR domain occupies 196–231 (EEMKQTLTEKMLQAAENMEFERAKEYRDQIKSIEAV).

This sequence belongs to the UvrC family. In terms of assembly, interacts with UvrB in an incision complex.

The protein resides in the cytoplasm. Functionally, the UvrABC repair system catalyzes the recognition and processing of DNA lesions. UvrC both incises the 5' and 3' sides of the lesion. The N-terminal half is responsible for the 3' incision and the C-terminal half is responsible for the 5' incision. The sequence is that of UvrABC system protein C from Brevibacillus brevis (strain 47 / JCM 6285 / NBRC 100599).